A 325-amino-acid chain; its full sequence is Ribose-phosphate pyrophosphokinase (325 aa).

ATP is bound by residues 45–47 (NGE) and 104–105 (RQ). Residues His-138 and Asp-178 each coordinate Mg(2+). Residue Lys-202 is part of the active site. Residues Arg-204, Asp-230, and 234–238 (DTGGT) each bind D-ribose 5-phosphate.

The protein belongs to the ribose-phosphate pyrophosphokinase family. Class I subfamily. In terms of assembly, homohexamer. It depends on Mg(2+) as a cofactor.

Its subcellular location is the cytoplasm. It carries out the reaction D-ribose 5-phosphate + ATP = 5-phospho-alpha-D-ribose 1-diphosphate + AMP + H(+). It functions in the pathway metabolic intermediate biosynthesis; 5-phospho-alpha-D-ribose 1-diphosphate biosynthesis; 5-phospho-alpha-D-ribose 1-diphosphate from D-ribose 5-phosphate (route I): step 1/1. Its function is as follows. Involved in the biosynthesis of the central metabolite phospho-alpha-D-ribosyl-1-pyrophosphate (PRPP) via the transfer of pyrophosphoryl group from ATP to 1-hydroxyl of ribose-5-phosphate (Rib-5-P). The chain is Ribose-phosphate pyrophosphokinase from Corynebacterium glutamicum (strain ATCC 13032 / DSM 20300 / JCM 1318 / BCRC 11384 / CCUG 27702 / LMG 3730 / NBRC 12168 / NCIMB 10025 / NRRL B-2784 / 534).